A 310-amino-acid chain; its full sequence is tRNA pseudouridine synthase B (310 aa).

The Nucleophile role is filled by D47.

The protein belongs to the pseudouridine synthase TruB family. Type 1 subfamily.

It catalyses the reaction uridine(55) in tRNA = pseudouridine(55) in tRNA. Functionally, responsible for synthesis of pseudouridine from uracil-55 in the psi GC loop of transfer RNAs. In Psychromonas ingrahamii (strain DSM 17664 / CCUG 51855 / 37), this protein is tRNA pseudouridine synthase B.